We begin with the raw amino-acid sequence, 89 residues long: MITVWPQYLDKNLSLNEGRKVSKEIAVEEPKLQDIEKALKRLNLPYSTQKERSYPGKWYEKSGRILVESDKPKLELLKEISLKLQEIKQ.

The protein belongs to the SRP19 family. Part of the signal recognition particle protein translocation system, which is composed of SRP and FtsY. Archaeal SRP consists of a 7S RNA molecule of 300 nucleotides and two protein subunits: SRP54 and SRP19.

The protein resides in the cytoplasm. Its function is as follows. Involved in targeting and insertion of nascent membrane proteins into the cytoplasmic membrane. Binds directly to 7S RNA and mediates binding of the 54 kDa subunit of the SRP. In Methanobrevibacter smithii (strain ATCC 35061 / DSM 861 / OCM 144 / PS), this protein is Signal recognition particle 19 kDa protein.